Reading from the N-terminus, the 307-residue chain is Malate dehydrogenase (307 aa).

NAD(+) contacts are provided by residues 8–13 and aspartate 33; that span reads GAGRVG. Residues arginine 82 and arginine 88 each contribute to the substrate site. Residues asparagine 95 and 118–120 contribute to the NAD(+) site; that span reads VSN. Substrate-binding residues include asparagine 120 and arginine 151. The active-site Proton acceptor is the histidine 175.

It belongs to the LDH/MDH superfamily. MDH type 3 family.

It carries out the reaction (S)-malate + NAD(+) = oxaloacetate + NADH + H(+). Its function is as follows. Catalyzes the reversible oxidation of malate to oxaloacetate. The sequence is that of Malate dehydrogenase from Thioalkalivibrio sulfidiphilus (strain HL-EbGR7).